The following is a 735-amino-acid chain: DNA replication licensing factor mcm5-B (735 aa).

An MCM domain is found at 332-538 (IYETVAKSIA…RDMTLAKHVM (207 aa)). Arg-372 lines the ADP pocket. The Arginine finger motif lies at 513 to 516 (SRFD).

It belongs to the MCM family. As to quaternary structure, component of the mcm2-7 complex (RLF-M). The complex forms a toroidal hexameric ring with the proposed subunit order mcm2-mcm6-mcm4-mcm7-mcm3-mcm5. The heterodimer of mmcm3/mcm5 interacts with mcm4, mmcm6, mcm7 and weakly with mcm2. Component of the CMG helicase complex, composed of the mcm2-7 complex, the GINS complex and cdc45.

The protein resides in the nucleus. It is found in the chromosome. It carries out the reaction ATP + H2O = ADP + phosphate + H(+). Functionally, acts as a component of the MCM2-7 complex (MCM complex) which is the replicative helicase essential for 'once per cell cycle' DNA replication initiation and elongation in eukaryotic cells. Core component of CDC45-MCM-GINS (CMG) helicase, the molecular machine that unwinds template DNA during replication, and around which the replisome is built. The active ATPase sites in the MCM2-7 ring are formed through the interaction surfaces of two neighboring subunits such that a critical structure of a conserved arginine finger motif is provided in trans relative to the ATP-binding site of the Walker A box of the adjacent subunit. The six ATPase active sites, however, are likely to contribute differentially to the complex helicase activity. The protein is DNA replication licensing factor mcm5-B (mcm5-b) of Xenopus laevis (African clawed frog).